The following is a 1416-amino-acid chain: MKDLVKFLKAQSKTSEDFDVIKIGLASPDMIRSWSFGEVKKPETINYRTFKPERDGLFCARIFGPVKDYECLCGKYKRLKHRGVICEKCGVEVTQTKVRRERMGHIELASPVAHIWFLKSLPSRIGLLLDMPLRDIERVLYFEMYIVTEPGMTDLERGQLLTEEQYLDAEDRWQDEFEAKMGAEAIQDLLKGMDLEAECEKLREELQETNSETKRKKITKRLKLLEAFVQSGNKPEWMVMTVLPVLPPDLRPLVPLDGGRFATSDLNDLYRRVINRNNRLKRLLDLIAPDIIVRNEKRMLQESVDALLDNGRRGRAITGSNRRPLKSLADMIKGKQGRFRQNLLGKRVDYSGRSVITVGPYLHLHQCGLPKKMALELFRPFIYAKLESRGYATTIKAAKKMVEREEAIVWDILAEVIREHPILLNRAPTLHRLGIQAFEPILIEGKAIQLHPLVCAAFNADFDGDQMAVHVPLTLEAQLEARALMMSTNNVLSPANGDPIIVPSQDVVLGLYYMTREKVNGKGEGMLLQDPREAEKAYRTGEAELHSRVKVRITEYVKNEAGEFDAKTTLTDTTIGRAILWMIAPKGMPYSLFNQTLGKKAISKLINEAYRRLGLKEAVMFADQIMYTGFAYAARSGSSVGIDDMEIPAKKYEIISAAEEEVAEIQEQFQSGLVTAGERYNKVIDIWAAANERVAKAMMENLSQEEVINREGNPEKQASFNSIFMMADSGARGSAAQIRQLAGMRGLMARPDGSIIETPITANFREGLNVLQYFISTHGARKGLADTALKTANSGYLTRRLVDVAQDLVIVEDDCGTHEGLVMTPLIEGGDEKVPLRELVLGRVAAEDILKPGAEEVLIPRNTLLDEKLCDVLDANSVDSVKVRSVVTCDTDFGVCAKCYGRDLARGHLINQGEAVGVIAAQSIGEPGTQLTMRTFHIGGAASAAAKESSVQVKNTGTVHLMNAKFVTNDESKLVLTSRNTELTITDAFGRTKEHYKVPYGAVLSKGDGQEVTAGETIANWDPHTMPVVSEVSGFVKFVDIIDGLTVTRQTDELTGLSSIVVQDVGERATAGKDLRPTIKLVDANGNDIFLPETDVLAQYFLPGKAIVSLDDGAAVKVGEPLARIPQESVGTKDITGGLPRVADLFEARKPKEPAILAEISGIVSFGKETKGKRRLLITPAEGETYEEMIPKWRQLNVFEGEMVQRGDVISDGAETPHDILRLRGVRAVTEYIVNEVQDVYRLQGVKINDKHIEVIVRQMLRKAVITKAYDSEFLEGEQVEVARVKIVNRQREAEGKPPVEFERELLGITKASLATESFISAASFQETTRVLTEAAVAGKRDELRGLKENVIVGRLIPAGTGFAYHQNRHKHRLVDDVVAKLSEEDEAAIADEFVMTADDASANLAEMLNMADDAE.

Zn(2+)-binding residues include Cys71, Cys73, Cys86, and Cys89. Asp461, Asp463, and Asp465 together coordinate Mg(2+). Cys815, Cys889, Cys896, and Cys899 together coordinate Zn(2+).

The protein belongs to the RNA polymerase beta' chain family. As to quaternary structure, the RNAP catalytic core consists of 2 alpha, 1 beta, 1 beta' and 1 omega subunit. When a sigma factor is associated with the core the holoenzyme is formed, which can initiate transcription. The cofactor is Mg(2+). Zn(2+) serves as cofactor.

It catalyses the reaction RNA(n) + a ribonucleoside 5'-triphosphate = RNA(n+1) + diphosphate. Its function is as follows. DNA-dependent RNA polymerase catalyzes the transcription of DNA into RNA using the four ribonucleoside triphosphates as substrates. The chain is DNA-directed RNA polymerase subunit beta' from Haemophilus influenzae (strain 86-028NP).